Consider the following 283-residue polypeptide: Cyclin-C (283 aa).

Residues 46–144 (NVIQALGEHL…ILECEFYLLE (99 aa)) enclose the Cyclin N-terminal domain. Positions 252 to 283 (TILSKMPKPKPPPNSEGEQGPNGSQNSSYSQS) are disordered. Residues 272 to 283 (PNGSQNSSYSQS) are compositionally biased toward polar residues. Ser-275 is modified (phosphoserine).

This sequence belongs to the cyclin family. Cyclin C subfamily. As to quaternary structure, component of the Mediator complex, which is composed of MED1, MED4, MED6, MED7, MED8, MED9, MED10, MED11, MED12, MED13, MED13L, MED14, MED15, MED16, MED17, MED18, MED19, MED20, MED21, MED22, MED23, MED24, MED25, MED26, MED27, MED29, MED30, MED31, CCNC, CDK8 and CDC2L6/CDK11. The MED12, MED13, CCNC and CDK8 subunits form a distinct module termed the CDK8 module. Mediator containing the CDK8 module is less active than Mediator lacking this module in supporting transcriptional activation. Individual preparations of the Mediator complex lacking one or more distinct subunits have been variously termed ARC, CRSP, DRIP, PC2, SMCC and TRAP. The cylin/CDK pair formed by CCNC/CDK8 also associates with the large subunit of RNA polymerase II. As to expression, highest levels in pancreas. High levels in heart, liver, skeletal muscle and kidney. Low levels in brain.

It is found in the nucleus. Its function is as follows. Component of the Mediator complex, a coactivator involved in regulated gene transcription of nearly all RNA polymerase II-dependent genes. Mediator functions as a bridge to convey information from gene-specific regulatory proteins to the basal RNA polymerase II transcription machinery. Mediator is recruited to promoters by direct interactions with regulatory proteins and serves as a scaffold for the assembly of a functional preinitiation complex with RNA polymerase II and the general transcription factors. Binds to and activates cyclin-dependent kinase CDK8 that phosphorylates the CTD (C-terminal domain) of the large subunit of RNA polymerase II (RNAp II), which may inhibit the formation of a transcription initiation complex. The protein is Cyclin-C (CCNC) of Homo sapiens (Human).